A 193-amino-acid chain; its full sequence is Ion-translocating oxidoreductase complex subunit A (193 aa).

6 helical membrane-spanning segments follow: residues 5 to 25 (LLLF…FLGL), 39 to 59 (MGMG…AWLI), 63 to 83 (ILIP…VIAV), 102 to 122 (LLGI…VALL), 134 to 154 (ALYG…FTAI), and 171 to 191 (AIAL…SGLV).

This sequence belongs to the NqrDE/RnfAE family. In terms of assembly, the complex is composed of six subunits: RsxA, RsxB, RsxC, RsxD, RsxE and RsxG.

The protein localises to the cell inner membrane. In terms of biological role, part of a membrane-bound complex that couples electron transfer with translocation of ions across the membrane. Required to maintain the reduced state of SoxR. The sequence is that of Ion-translocating oxidoreductase complex subunit A from Shigella boydii serotype 4 (strain Sb227).